The primary structure comprises 112 residues: Nitrogen regulatory protein P-II (112 aa).

Y51 is subject to O-UMP-tyrosine.

Belongs to the P(II) protein family. Homotrimer.

Its function is as follows. In nitrogen-limiting conditions, when the ratio of Gln to 2-ketoglutarate decreases, P-II is uridylylated to P-II-UMP. P-II-UMP allows the deadenylation of glutamine synthetase (GS), thus activating the enzyme. Conversely, in nitrogen excess P-II is deuridylated and promotes the adenylation of GS. P-II indirectly controls the transcription of the GS gene (glnA). P-II prevents NR-II-catalyzed conversion of NR-I to NR-I-phosphate, the transcriptional activator of glnA. When P-II is uridylylated to P-II-UMP, these events are reversed. In Mesorhizobium japonicum (strain LMG 29417 / CECT 9101 / MAFF 303099) (Mesorhizobium loti (strain MAFF 303099)), this protein is Nitrogen regulatory protein P-II (glnB).